The sequence spans 139 residues: UPF0216 protein MJ1224 (139 aa).

Belongs to the UPF0216 family.

The polypeptide is UPF0216 protein MJ1224 (Methanocaldococcus jannaschii (strain ATCC 43067 / DSM 2661 / JAL-1 / JCM 10045 / NBRC 100440) (Methanococcus jannaschii)).